A 144-amino-acid polypeptide reads, in one-letter code: Putative pre-16S rRNA nuclease (144 aa).

This sequence belongs to the YqgF nuclease family.

The protein resides in the cytoplasm. Its function is as follows. Could be a nuclease involved in processing of the 5'-end of pre-16S rRNA. This is Putative pre-16S rRNA nuclease from Prochlorococcus marinus (strain NATL1A).